Here is a 2624-residue protein sequence, read N- to C-terminus: Transcription factor TFIIIB component B'' homolog (2624 aa).

Residues 1–142 are disordered; sequence MFRRARLSVK…TKEKQPCSDR (142 aa). The segment at 1–299 is interaction with ZBTB43; sequence MFRRARLSVK…TYSSFRKNYY (299 aa). The span at 63 to 77 shows a compositional bias: basic and acidic residues; it reads PQEKAPRSSTEKTGG. A compositionally biased stretch (low complexity) spans 99-119; sequence SSTSSLVKSSVSVPSESHPLS. The span at 120 to 132 shows a compositional bias: polar residues; it reads TINQEAPQPTATS. The span at 133 to 142 shows a compositional bias: basic and acidic residues; the sequence is TKEKQPCSDR. Residues 144–177 adopt a coiled-coil conformation; sequence RIYKAQKLREMLKEELRKEKKQWKNKYAINESQR. The interval 193-241 is disordered; sequence LPDNNPMTSSLEQEKKTEKPSTPVQTREQEGKSTPNAEDNEMEEETDDG. Polar residues predominate over residues 212-229; sequence PSTPVQTREQEGKSTPNA. The span at 230-240 shows a compositional bias: acidic residues; that stretch reads EDNEMEEETDD. The region spanning 295 to 345 is the Myb-like domain; it reads RKNYYSKPWSNKETDMFFLAISMVGTDFSMIGQLFPHRARIEIKNKFKREE. The segment at 355–470 is required for phosphorylation by CSNK2A1; sequence AFQEKRPFDF…QKKRRRKKQD (116 aa). 4 disordered regions span residues 379-449, 544-567, 606-663, and 729-759; these read EKRK…SRED, LSLS…TSDL, ENVK…MNTL, and EEIG…SRKD. Positions 397–407 are enriched in basic residues; the sequence is TKPRKNVKVKK. Residues 552 to 565 show a composition bias toward low complexity; sequence ATSVATESSESSTS. Basic and acidic residues-rich tracts occupy residues 637–663 and 736–759; these read TESE…MNTL and EKNE…SRKD. The stretch at 823–877 is one 1; approximate repeat; it reads GRREISSKEEVLEKILVSGEMAAALRETVRLDTSPKEMVPAEINTKEMQSDLKET. The segment at 823–1327 is 9 X 55 AA repeats of G-R-R-X-I-S-P-X-E-N-G-X-E-E-V-K-P-X-X-E-M-E-T-D-L-K-X-T-G-R-E-X-X-X-R-E-K-T-X-E-X-X-D-A-X-E-E-I-D-X-D-L-E-E-T; that stretch reads GRREISSKEE…PRENELEETS (505 aa). 6 repeat units span residues 878-932, 933-987, 988-1040, 1041-1094, 1095-1148, and 1149-1203. Thr915 is modified (phosphothreonine). 2 stretches are compositionally biased toward basic and acidic residues: residues 930-957 and 979-1006; these read EEAG…ETDL and EIDK…KPVD. Residues 930–1222 are disordered; the sequence is EEAGRREISP…GPEEVKPVGK (293 aa). The span at 1030 to 1041 shows a compositional bias: acidic residues; sequence DATEEIDLEETE. The span at 1052–1079 shows a compositional bias: basic and acidic residues; sequence EEVKPLGEMETDLKATGRDSFPRGKTPE. Residues 1078-1103 adopt a coiled-coil conformation; sequence PEVIDAIEEIEIDLEETEREISPQEN. Residues 1082-1095 show a composition bias toward acidic residues; it reads DAIEEIEIDLEETE. Positions 1120 to 1133 are enriched in basic and acidic residues; the sequence is ATGREISPREKTPE. Positions 1136–1145 are enriched in acidic residues; sequence DATEEIDKDL. Positions 1161 to 1190 are enriched in basic and acidic residues; it reads EEVKPVDEMETDLKTTGREGSSREKTREVI. The segment covering 1194–1204 has biased composition (acidic residues); sequence EVIETDLEETE. Residues 1204–1257 form an 8; approximate repeat; that stretch reads EREISPQENGPEEVKPVGKMETDLKEIREEISQREKVLAEFSAIREKEIDLKET. Residues 1223–1284 are a coiled coil; it reads METDLKEIRE…VEEMEADLKE (62 aa). The stretch at 1258-1327 is one 9; approximate repeat; that stretch reads GKRDIPIMEK…PRENELEETS (70 aa). Basic and acidic residues predominate over residues 1306-1321; the sequence is AELKQTGKTDISPREN. Disordered regions lie at residues 1306-1348, 1365-1440, 1519-1543, 1684-1722, 1819-1863, 2130-2164, 2181-2200, 2207-2241, 2444-2501, and 2519-2566; these read AELK…SAVP, TPVE…RFKR, TERN…VQKN, KAKP…LQKG, STSE…ASKA, GAEM…ENKD, SEVN…QEVH, VASS…GDSV, FQSR…SRPG, and SDEP…PSPS. Polar residues predominate over residues 1326–1344; sequence TSTSRQTDTHLMQSGSNDF. A compositionally biased stretch (basic and acidic residues) spans 1366 to 1378; it reads PVEEKRNSEKEVS. Polar residues-rich tracts occupy residues 1379–1390, 1411–1421, and 1519–1529; these read SHFSHFKISSQT, SDINLSKSLPQ, and TERNLSPSNSC. Residues 1695-1719 show a composition bias toward basic and acidic residues; that stretch reads KKEEPVLEKVTTDQSKEGKPEDHLL. Residues 1844 to 1853 are compositionally biased toward basic residues; sequence RGSKRVRGKT. Residues 2131-2151 show a composition bias toward basic and acidic residues; it reads AEMETQRETEKNASKATELEN. The span at 2470–2479 shows a compositional bias: basic and acidic residues; that stretch reads VSDKEERTDA. Positions 2488–2498 are enriched in low complexity; sequence SRTSSSKASLS. A compositionally biased stretch (basic residues) spans 2526-2544; that stretch reads HSKKRLKPLIPGLRKKLKR.

Component of TFIIIB complex. The TFIIIB complex has two activities, alpha and beta. The TFIIIB-alpha and TFIIIB-beta activities are required for transcription of genes with TFIIIC-bound internal promoters and PSE transcription factor-bound external promoters, respectively. The TFIIIB-alpha activity complex is composed of TBP, BDP1, and a complex containing both BRF2 and at least four stably associated proteins; YY1 facilitates the formation of TFIIIB-alpha activity complex. The TFIIIB-beta activity complex is composed of TBP, BDP1, and BRF1. Interacts with BRF1; this interaction diminishes during mitosis resulting in the release of BDP1 from chromosomal templates. Component of TFIIIC complex. The TFIIIC complex has two activities, C1 and C2. The TFIIIC2 activity complex is only required for transcription of the 'classical' pol III genes whereas the TFIIIC1 activity complex is required for transcription of all pol III genes. The TFIIIC1 activity complex is composed at least of BDP1. Interacts with ZBTB43. Post-translationally, phosphorylated by CSNK2A1 during mitosis, resulting in its release from chromatin and suppression of polymerase III transcription. As to expression, isoform 2 is highly expressed in cerebellum.

It is found in the nucleus. Functionally, general activator of RNA polymerase III transcription. Requires for transcription from all three types of polymerase III promoters. Requires for transcription of genes with internal promoter elements and with promoter elements upstream of the initiation site. The sequence is that of Transcription factor TFIIIB component B'' homolog (BDP1) from Homo sapiens (Human).